Here is a 333-residue protein sequence, read N- to C-terminus: tRNA dimethylallyltransferase (333 aa).

Position 16–23 (16–23 (GPTASGKT)) interacts with ATP. Position 18-23 (18-23 (TASGKT)) interacts with substrate. Interaction with substrate tRNA regions lie at residues 41 to 44 (DSAL), 165 to 169 (QRISR), and 253 to 258 (RCVGYR).

It belongs to the IPP transferase family. In terms of assembly, monomer. Mg(2+) serves as cofactor.

The catalysed reaction is adenosine(37) in tRNA + dimethylallyl diphosphate = N(6)-dimethylallyladenosine(37) in tRNA + diphosphate. Its function is as follows. Catalyzes the transfer of a dimethylallyl group onto the adenine at position 37 in tRNAs that read codons beginning with uridine, leading to the formation of N6-(dimethylallyl)adenosine (i(6)A). The sequence is that of tRNA dimethylallyltransferase from Polaromonas sp. (strain JS666 / ATCC BAA-500).